A 359-amino-acid chain; its full sequence is Chaperone protein DnaJ (359 aa).

Residues 3–68 (DYYEILGVPK…ERRQTYDRYG (66 aa)) enclose the J domain. The segment at 128 to 205 (GVSKDIKYKI…CAGKGFIEEQ (78 aa)) adopts a CR-type zinc-finger fold. Residues C141, C144, C157, C160, C179, C182, C193, and C196 each coordinate Zn(2+). 4 CXXCXGXG motif repeats span residues 141–148 (CKTCDGTG), 157–164 (CPYCGGSG), 179–186 (CPFCKGSG), and 193–200 (CHDCAGKG).

It belongs to the DnaJ family. Homodimer. Requires Zn(2+) as cofactor.

The protein resides in the cytoplasm. Functionally, participates actively in the response to hyperosmotic and heat shock by preventing the aggregation of stress-denatured proteins and by disaggregating proteins, also in an autonomous, DnaK-independent fashion. Unfolded proteins bind initially to DnaJ; upon interaction with the DnaJ-bound protein, DnaK hydrolyzes its bound ATP, resulting in the formation of a stable complex. GrpE releases ADP from DnaK; ATP binding to DnaK triggers the release of the substrate protein, thus completing the reaction cycle. Several rounds of ATP-dependent interactions between DnaJ, DnaK and GrpE are required for fully efficient folding. Also involved, together with DnaK and GrpE, in the DNA replication of plasmids through activation of initiation proteins. The sequence is that of Chaperone protein DnaJ from Campylobacter hominis (strain ATCC BAA-381 / DSM 21671 / CCUG 45161 / LMG 19568 / NCTC 13146 / CH001A).